A 282-amino-acid polypeptide reads, in one-letter code: tRNA (adenine(57)-N(1)/adenine(58)-N(1))-methyltransferase TrmI (282 aa).

Residues 98–101 (SGAL), aspartate 119, aspartate 172, and aspartate 188 each bind S-adenosyl-L-methionine.

It belongs to the class I-like SAM-binding methyltransferase superfamily. TRM61 family. As to quaternary structure, homotetramer composed of a dimer of dimers.

The enzyme catalyses adenosine(57)/adenosine(58) in tRNA + 2 S-adenosyl-L-methionine = N(1)-methyladenosine(57)/N(1)-methyladenosine(58) in tRNA + 2 S-adenosyl-L-homocysteine + 2 H(+). Functionally, catalyzes the S-adenosyl-L-methionine-dependent formation of N(1)-methyladenine at position 58 (m1A58) in tRNA. This chain is tRNA (adenine(57)-N(1)/adenine(58)-N(1))-methyltransferase TrmI (trmI), found in Methanocaldococcus jannaschii (strain ATCC 43067 / DSM 2661 / JAL-1 / JCM 10045 / NBRC 100440) (Methanococcus jannaschii).